Consider the following 393-residue polypeptide: Acetate kinase (393 aa).

Mg(2+) is bound at residue N6. An ATP-binding site is contributed by K13. Position 87 (R87) interacts with substrate. D143 serves as the catalytic Proton donor/acceptor. ATP-binding positions include H203 to G207, D278 to R280, and G326 to N330. E380 serves as a coordination point for Mg(2+).

The protein belongs to the acetokinase family. As to quaternary structure, homodimer. It depends on Mg(2+) as a cofactor. Mn(2+) is required as a cofactor.

It localises to the cytoplasm. It catalyses the reaction acetate + ATP = acetyl phosphate + ADP. Its pathway is metabolic intermediate biosynthesis; acetyl-CoA biosynthesis; acetyl-CoA from acetate: step 1/2. Functionally, catalyzes the formation of acetyl phosphate from acetate and ATP. Can also catalyze the reverse reaction. This chain is Acetate kinase, found in Mycoplasma capricolum subsp. capricolum (strain California kid / ATCC 27343 / NCTC 10154).